A 351-amino-acid chain; its full sequence is Photosystem II D2 protein (351 aa).

The chain crosses the membrane as a helical span at residues 39-59; that stretch reads TAYLAAGGWMTGTTFVTSWYT. Chlorophyll a is bound at residue H116. Residues 123 to 139 traverse the membrane as a helical segment; that stretch reads GFCLRQFEIARLVGIRP. 2 residues coordinate pheophytin a: Q128 and N141. Residues 151–164 form a helical membrane-spanning segment; that stretch reads VFVSVFLLYPLGQA. Residue H196 participates in chlorophyll a binding. Residues 206–226 form a helical membrane-spanning segment; sequence GALLCAIHGATVENTLFEDGD. 2 residues coordinate a plastoquinone: H213 and F260. H213 is a binding site for Fe cation. H267 lines the Fe cation pocket. The helical transmembrane segment at 277 to 293 threads the bilayer; sequence GLWTSAIGIVGLALNLR.

It belongs to the reaction center PufL/M/PsbA/D family. In terms of assembly, PSII is composed of 1 copy each of membrane proteins PsbA, PsbB, PsbC, PsbD, PsbE, PsbF, PsbH, PsbI, PsbJ, PsbK, PsbL, PsbM, PsbT, PsbX, PsbY, PsbZ, Psb30/Ycf12, at least 3 peripheral proteins of the oxygen-evolving complex and a large number of cofactors. It forms dimeric complexes. The D1/D2 heterodimer binds P680, chlorophylls that are the primary electron donor of PSII, and subsequent electron acceptors. It shares a non-heme iron and each subunit binds pheophytin, quinone, additional chlorophylls, carotenoids and lipids. There is also a Cl(-1) ion associated with D1 and D2, which is required for oxygen evolution. The PSII complex binds additional chlorophylls, carotenoids and specific lipids. is required as a cofactor.

It is found in the plastid. The protein localises to the chloroplast thylakoid membrane. It catalyses the reaction 2 a plastoquinone + 4 hnu + 2 H2O = 2 a plastoquinol + O2. Photosystem II (PSII) is a light-driven water:plastoquinone oxidoreductase that uses light energy to abstract electrons from H(2)O, generating O(2) and a proton gradient subsequently used for ATP formation. It consists of a core antenna complex that captures photons, and an electron transfer chain that converts photonic excitation into a charge separation. The D1/D2 (PsbA/PsbD) reaction center heterodimer binds P680, the primary electron donor of PSII as well as several subsequent electron acceptors. D2 is needed for assembly of a stable PSII complex. The polypeptide is Photosystem II D2 protein (Trieres chinensis (Marine centric diatom)).